The primary structure comprises 266 residues: Family of serine hydrolases 3 (266 aa).

Residues S117, D180, and H209 each act as charge relay system in the active site.

The protein belongs to the AB hydrolase 3 family.

Its function is as follows. Serine hydrolase of unknown specificity. The chain is Family of serine hydrolases 3 (FSH3) from Saccharomyces cerevisiae (strain ATCC 204508 / S288c) (Baker's yeast).